Here is a 290-residue protein sequence, read N- to C-terminus: Zinc finger AN1 and C2H2 domain-containing stress-associated protein 16 (290 aa).

2 AN1-type zinc fingers span residues 7-55 (PNLG…QKDV) and 95-145 (VTKK…KPES). The Zn(2+) site is built by C13, C18, C28, C31, C36, H39, H45, C47, C101, C106, C118, C121, C126, H129, H135, and C137. C2H2-type zinc fingers lie at residues 224-247 (EQCV…EKSH) and 261-284 (DVCP…ERDH).

In terms of biological role, may be involved in environmental stress response. The chain is Zinc finger AN1 and C2H2 domain-containing stress-associated protein 16 (SAP16) from Oryza sativa subsp. japonica (Rice).